A 406-amino-acid polypeptide reads, in one-letter code: Tryptophan synthase beta chain (406 aa).

Residue lysine 99 is modified to N6-(pyridoxal phosphate)lysine.

Belongs to the TrpB family. Tetramer of two alpha and two beta chains. Pyridoxal 5'-phosphate serves as cofactor.

The enzyme catalyses (1S,2R)-1-C-(indol-3-yl)glycerol 3-phosphate + L-serine = D-glyceraldehyde 3-phosphate + L-tryptophan + H2O. The protein operates within amino-acid biosynthesis; L-tryptophan biosynthesis; L-tryptophan from chorismate: step 5/5. Its function is as follows. The beta subunit is responsible for the synthesis of L-tryptophan from indole and L-serine. The protein is Tryptophan synthase beta chain of Methylobacterium sp. (strain 4-46).